The primary structure comprises 138 residues: Large ribosomal subunit protein bL12c (138 aa).

It belongs to the bacterial ribosomal protein bL12 family. Homodimer. Part of the ribosomal stalk of the 50S ribosomal subunit. Forms a multimeric L10(L12)X complex, where L10 forms an elongated spine to which 2 to 4 L12 dimers bind in a sequential fashion. Binds GTP-bound translation factors.

The protein resides in the plastid. Forms part of the ribosomal stalk which helps the ribosome interact with GTP-bound translation factors. Is thus essential for accurate translation. The protein is Large ribosomal subunit protein bL12c of Euglena longa (Euglenophycean alga).